The chain runs to 425 residues: Adenylosuccinate synthetase (425 aa).

GTP is bound by residues 12-18 (GDEGKGK) and 40-42 (GHT). Asp13 serves as the catalytic Proton acceptor. Residues Asp13 and Gly40 each coordinate Mg(2+). IMP is bound by residues 13 to 16 (DEGK), 38 to 41 (NAGH), Thr127, Arg141, Gln222, Thr237, and Arg301. The active-site Proton donor is the His41. 297-303 (AVTGRPR) lines the substrate pocket. GTP-binding positions include Arg303, 329–331 (KID), and 411–413 (SVG).

This sequence belongs to the adenylosuccinate synthetase family. In terms of assembly, homodimer. The cofactor is Mg(2+).

The protein localises to the cytoplasm. The catalysed reaction is IMP + L-aspartate + GTP = N(6)-(1,2-dicarboxyethyl)-AMP + GDP + phosphate + 2 H(+). It functions in the pathway purine metabolism; AMP biosynthesis via de novo pathway; AMP from IMP: step 1/2. Its function is as follows. Plays an important role in the de novo pathway of purine nucleotide biosynthesis. Catalyzes the first committed step in the biosynthesis of AMP from IMP. This chain is Adenylosuccinate synthetase, found in Fusobacterium nucleatum subsp. nucleatum (strain ATCC 25586 / DSM 15643 / BCRC 10681 / CIP 101130 / JCM 8532 / KCTC 2640 / LMG 13131 / VPI 4355).